A 490-amino-acid chain; its full sequence is Tektin-3 (490 aa).

Thr-7 and Thr-9 each carry an O-linked (GalNAc...) threonine glycan. N-linked (GlcNAc...) asparagine glycans are attached at residues Asn-41, Asn-86, Asn-111, and Asn-276. Residues 419 to 456 (RLVNEVYEVDETIQTLQQRLRDSEDTLQSLAHTKATLE) adopt a coiled-coil conformation.

Belongs to the tektin family. In terms of assembly, microtubule inner protein component of sperm flagellar doublet microtubules. Interacts with TEKT1, TEKT2, TEKT4 and TEKT5. Interacts with CCDC38. N- and O-glycosylated. Post-translationally, may be proteolytically processed during the epididymal transit of spermatozoa. In terms of processing, ubiquitinated, leading to its degradation. Deubiquitinated by USP16, promoting its stability. Expressed in epididymal sperm (at protein level).

It localises to the cytoplasm. The protein resides in the cytoskeleton. It is found in the cilium axoneme. The protein localises to the flagellum axoneme. Its subcellular location is the cytoplasmic vesicle. It localises to the secretory vesicle. The protein resides in the acrosome outer membrane. Its function is as follows. Microtubule inner protein (MIP) part of the dynein-decorated doublet microtubules (DMTs) in cilia and flagellar axoneme. Forms filamentous polymers in the walls of ciliary and flagellar microtubules. Required for normal sperm mobility. The protein is Tektin-3 (Tekt3) of Rattus norvegicus (Rat).